Here is a 798-residue protein sequence, read N- to C-terminus: Suppressor of spindle checkpoint defect 1 (798 aa).

Positions 339–359 (ESIQQSQVNVDDMCNRIANME) form a coiled coil.

Belongs to the APC5 family. The APC/C complex is probably composed of at least 12 subunits: apc-2, apc-10, apc-11, cdc-26, emb-1, emb-27, emb-30, mat-1, mat-2, mat-3, such-1 and gfi-3. In terms of tissue distribution, expressed in head neurons, vulval precursor cells and in mature sperm stored in the spermatheca.

The protein operates within protein modification; protein ubiquitination. Probable component of the anaphase promoting complex/cyclosome (APC/C), a cell cycle-regulated E3 ubiquitin ligase that controls progression through mitosis and the G1 phase of the cell cycle. The APC/C complex acts by mediating ubiquitination and subsequent degradation of target proteins. Required for the metaphase to anaphase transition in meiosis. Plays a role in the segregation of DNA and centrioles during meiosis in male germ cells. In Caenorhabditis elegans, this protein is Suppressor of spindle checkpoint defect 1.